A 276-amino-acid chain; its full sequence is Large ribosomal subunit protein uL2 (276 aa).

Disordered regions lie at residues 1 to 58 and 218 to 276; these read MAIR…GGGH and RPIT…KNRK. The span at 16-27 shows a compositional bias: polar residues; sequence ASVSDFSDLTRS. Positions 255 to 276 are enriched in basic residues; it reads RRPKKASNKMIVRRRPNGKNRK.

The protein belongs to the universal ribosomal protein uL2 family. In terms of assembly, part of the 50S ribosomal subunit. Forms a bridge to the 30S subunit in the 70S ribosome.

In terms of biological role, one of the primary rRNA binding proteins. Required for association of the 30S and 50S subunits to form the 70S ribosome, for tRNA binding and peptide bond formation. It has been suggested to have peptidyltransferase activity; this is somewhat controversial. Makes several contacts with the 16S rRNA in the 70S ribosome. The sequence is that of Large ribosomal subunit protein uL2 from Bifidobacterium animalis subsp. lactis (strain AD011).